The primary structure comprises 200 residues: Recombination protein RecR (200 aa).

The C4-type zinc finger occupies 57–72 (CNECRTFTEEDVCHIC). Residues 81 to 176 (GLLCVVESPA…DASRIAHGVP (96 aa)) form the Toprim domain.

This sequence belongs to the RecR family.

In terms of biological role, may play a role in DNA repair. It seems to be involved in an RecBC-independent recombinational process of DNA repair. It may act with RecF and RecO. This is Recombination protein RecR from Vibrio vulnificus (strain CMCP6).